We begin with the raw amino-acid sequence, 231 residues long: 5'-methylthioadenosine/S-adenosylhomocysteine nucleosidase (231 aa).

The active-site Proton acceptor is Glu-12. Residues Gly-78, Met-153, and 174–175 (ME) contribute to the substrate site. Asp-198 acts as the Proton donor in catalysis.

It belongs to the PNP/UDP phosphorylase family. MtnN subfamily.

The catalysed reaction is S-adenosyl-L-homocysteine + H2O = S-(5-deoxy-D-ribos-5-yl)-L-homocysteine + adenine. It carries out the reaction S-methyl-5'-thioadenosine + H2O = 5-(methylsulfanyl)-D-ribose + adenine. It catalyses the reaction 5'-deoxyadenosine + H2O = 5-deoxy-D-ribose + adenine. Its pathway is amino-acid biosynthesis; L-methionine biosynthesis via salvage pathway; S-methyl-5-thio-alpha-D-ribose 1-phosphate from S-methyl-5'-thioadenosine (hydrolase route): step 1/2. Functionally, catalyzes the irreversible cleavage of the glycosidic bond in both 5'-methylthioadenosine (MTA) and S-adenosylhomocysteine (SAH/AdoHcy) to adenine and the corresponding thioribose, 5'-methylthioribose and S-ribosylhomocysteine, respectively. Also cleaves 5'-deoxyadenosine, a toxic by-product of radical S-adenosylmethionine (SAM) enzymes, into 5-deoxyribose and adenine. In Bacillus subtilis (strain 168), this protein is 5'-methylthioadenosine/S-adenosylhomocysteine nucleosidase.